The primary structure comprises 576 residues: Zinc finger protein 791 (576 aa).

The KRAB domain occupies 4 to 90; that stretch reads VAFKDVSVSF…AETFSPNLSV (87 aa). C2H2-type zinc fingers lie at residues 100-122, 132-154, 160-182, 188-210, 216-238, 244-266, 272-294, 300-322, 328-350, 356-378, 384-406, 412-434, 440-462, 468-490, 496-518, 524-546, and 552-574; these read YECT…MRSH, YKCK…ERSH, YKCK…EQTH, YECK…ERIH, YECK…ERTH, YACK…MITH, YKCK…ERIH, YTCK…ERIH, YKCK…VRVH, YKCK…ERTH, YECK…KRNH, YECK…MITH, YKCR…ERTH, YECK…KRTH, YECK…MRMH, YKCK…TRIH, and LECK…MRMH.

It belongs to the krueppel C2H2-type zinc-finger protein family.

The protein resides in the nucleus. May be involved in transcriptional regulation. This chain is Zinc finger protein 791 (ZNF791), found in Pongo abelii (Sumatran orangutan).